Consider the following 347-residue polypeptide: GMP reductase (347 aa).

108–131 (TDFEKTKQILIANPALNFLCIDVA) lines the NADP(+) pocket. K(+) is bound by residues Gly181 and Gly183. Catalysis depends on Cys186, which acts as the Thioimidate intermediate. 216-239 (IISDGGCTMPGDVAKAFGGGADFV) contributes to the NADP(+) binding site.

The protein belongs to the IMPDH/GMPR family. GuaC type 1 subfamily. As to quaternary structure, homotetramer.

It carries out the reaction IMP + NH4(+) + NADP(+) = GMP + NADPH + 2 H(+). Its function is as follows. Catalyzes the irreversible NADPH-dependent deamination of GMP to IMP. It functions in the conversion of nucleobase, nucleoside and nucleotide derivatives of G to A nucleotides, and in maintaining the intracellular balance of A and G nucleotides. The polypeptide is GMP reductase (Enterobacter sp. (strain 638)).